Here is an 808-residue protein sequence, read N- to C-terminus: Phenylalanine--tRNA ligase beta subunit (808 aa).

Residues 40 to 157 (NKGATNVVVG…QSVEPGQDAL (118 aa)) form the tRNA-binding domain. One can recognise a B5 domain in the interval 411–486 (RSERVIALDL…RLYGYDELPS (76 aa)). Positions 464, 470, 473, and 474 each coordinate Mg(2+). The 94-residue stretch at 714 to 807 (PRYPAITRDM…VQKQTGAVLR (94 aa)) folds into the FDX-ACB domain.

It belongs to the phenylalanyl-tRNA synthetase beta subunit family. Type 1 subfamily. As to quaternary structure, tetramer of two alpha and two beta subunits. Requires Mg(2+) as cofactor.

Its subcellular location is the cytoplasm. It catalyses the reaction tRNA(Phe) + L-phenylalanine + ATP = L-phenylalanyl-tRNA(Phe) + AMP + diphosphate + H(+). The sequence is that of Phenylalanine--tRNA ligase beta subunit from Shouchella clausii (strain KSM-K16) (Alkalihalobacillus clausii).